A 728-amino-acid chain; its full sequence is Probable ubiquitin-conjugating enzyme protein 17 (728 aa).

The segment covering 1-17 has biased composition (low complexity); that stretch reads MSSQASQRSSSTSAVAQ. Disordered regions lie at residues 1-23 and 123-155; these read MSSQ…RERR and SSRS…GSTR. A UBC core domain is found at 402-568; sequence DRTKRIAKEL…IEHATLNYAI (167 aa). Residue Cys495 is the Glycyl thioester intermediate of the active site. Disordered stretches follow at residues 649–678 and 709–728; these read PFAK…EAAA and RTQP…STSS. Basic and acidic residues predominate over residues 658–678; that stretch reads SERLKREQSEKEEKQKKEAAA. Polar residues predominate over residues 710 to 728; the sequence is TQPTGDYSVPSVNEPSTSS.

This sequence belongs to the ubiquitin-conjugating enzyme family.

In Caenorhabditis elegans, this protein is Probable ubiquitin-conjugating enzyme protein 17 (ubc-17).